Here is a 632-residue protein sequence, read N- to C-terminus: Threonine--tRNA ligase (632 aa).

Residues 1–61 (MPIVTLPDGS…EHDAEVSILT (61 aa)) enclose the TGS domain. The segment at 242–533 (DHRKLARKLD…LIEHYAGSMP (292 aa)) is catalytic. 3 residues coordinate Zn(2+): Cys333, His384, and His510.

The protein belongs to the class-II aminoacyl-tRNA synthetase family. Homodimer. The cofactor is Zn(2+).

The protein resides in the cytoplasm. The enzyme catalyses tRNA(Thr) + L-threonine + ATP = L-threonyl-tRNA(Thr) + AMP + diphosphate + H(+). Its function is as follows. Catalyzes the attachment of threonine to tRNA(Thr) in a two-step reaction: L-threonine is first activated by ATP to form Thr-AMP and then transferred to the acceptor end of tRNA(Thr). Also edits incorrectly charged L-seryl-tRNA(Thr). In Chromohalobacter salexigens (strain ATCC BAA-138 / DSM 3043 / CIP 106854 / NCIMB 13768 / 1H11), this protein is Threonine--tRNA ligase.